Consider the following 85-residue polypeptide: MPVVTGRLRDPDINPCLSESDASTRCLDENNYDKERCSTYFLKYKNCRKFWHSIMMQRRRNGVKPCMPTAAERDEILRAMGKMPY.

A CHCH domain is found at Ile-13–Met-55. 2 consecutive short sequence motifs (cx9C motif) follow at residues Cys-16–Cys-26 and Cys-37–Cys-47. Cystine bridges form between Cys-16–Cys-47 and Cys-26–Cys-37.

This sequence belongs to the CHCHD7 family. In terms of assembly, monomer.

Its subcellular location is the mitochondrion intermembrane space. The sequence is that of Coiled-coil-helix-coiled-coil-helix domain-containing protein 7 (CHCHD7) from Macaca fascicularis (Crab-eating macaque).